A 145-amino-acid polypeptide reads, in one-letter code: Small ribosomal subunit protein uS19 (145 aa).

Belongs to the universal ribosomal protein uS19 family. Component of the small ribosomal subunit.

It is found in the cytoplasm. Component of the small ribosomal subunit. The ribosome is a large ribonucleoprotein complex responsible for the synthesis of proteins in the cell. This is Small ribosomal subunit protein uS19 (rps15) from Xenopus laevis (African clawed frog).